A 197-amino-acid polypeptide reads, in one-letter code: Peptide deformylase (197 aa).

The Fe cation site is built by Cys106 and His148. Glu149 is a catalytic residue. Residue His152 coordinates Fe cation.

It belongs to the polypeptide deformylase family. It depends on Fe(2+) as a cofactor.

It carries out the reaction N-terminal N-formyl-L-methionyl-[peptide] + H2O = N-terminal L-methionyl-[peptide] + formate. Functionally, removes the formyl group from the N-terminal Met of newly synthesized proteins. Requires at least a dipeptide for an efficient rate of reaction. N-terminal L-methionine is a prerequisite for activity but the enzyme has broad specificity at other positions. In Mycobacterium sp. (strain JLS), this protein is Peptide deformylase.